The sequence spans 397 residues: Chorismate synthase (397 aa).

NADP(+)-binding residues include Arg40 and Arg46. FMN-binding positions include 129 to 131, 257 to 258, Gly302, 317 to 321, and Arg343; these read RSS, QA, and KPISS.

The protein belongs to the chorismate synthase family. Homotetramer. FMNH2 serves as cofactor.

The catalysed reaction is 5-O-(1-carboxyvinyl)-3-phosphoshikimate = chorismate + phosphate. It functions in the pathway metabolic intermediate biosynthesis; chorismate biosynthesis; chorismate from D-erythrose 4-phosphate and phosphoenolpyruvate: step 7/7. Functionally, catalyzes the anti-1,4-elimination of the C-3 phosphate and the C-6 proR hydrogen from 5-enolpyruvylshikimate-3-phosphate (EPSP) to yield chorismate, which is the branch point compound that serves as the starting substrate for the three terminal pathways of aromatic amino acid biosynthesis. This reaction introduces a second double bond into the aromatic ring system. The chain is Chorismate synthase from Chlorobaculum tepidum (strain ATCC 49652 / DSM 12025 / NBRC 103806 / TLS) (Chlorobium tepidum).